The chain runs to 84 residues: Sulfur carrier protein TusA (84 aa).

The active-site Cysteine persulfide intermediate is the Cys-19.

This sequence belongs to the sulfur carrier protein TusA family. Interacts with IscS.

The protein localises to the cytoplasm. The protein operates within tRNA modification. Functionally, sulfur carrier protein involved in sulfur trafficking in the cell. Part of a sulfur-relay system required for 2-thiolation during synthesis of 2-thiouridine of the modified wobble base 5-methylaminomethyl-2-thiouridine (mnm(5)s(2)U) in tRNA. Interacts with IscS and stimulates its cysteine desulfurase activity. Accepts an activated sulfur from IscS, which is then transferred to TusD, and thus determines the direction of sulfur flow from IscS to 2-thiouridine formation. Also appears to be involved in sulfur transfer for the biosynthesis of molybdopterin. The protein is Sulfur carrier protein TusA of Yersinia enterocolitica serotype O:8 / biotype 1B (strain NCTC 13174 / 8081).